A 281-amino-acid chain; its full sequence is NAD kinase (281 aa).

The Proton acceptor role is filled by Asp61. Residues 61–62 (DG), 134–135 (ND), Arg145, Asp164, 175–180 (TAYSLS), and Gln234 contribute to the NAD(+) site.

This sequence belongs to the NAD kinase family. Requires a divalent metal cation as cofactor.

Its subcellular location is the cytoplasm. The catalysed reaction is NAD(+) + ATP = ADP + NADP(+) + H(+). Involved in the regulation of the intracellular balance of NAD and NADP, and is a key enzyme in the biosynthesis of NADP. Catalyzes specifically the phosphorylation on 2'-hydroxyl of the adenosine moiety of NAD to yield NADP. This chain is NAD kinase, found in Clostridium botulinum (strain Loch Maree / Type A3).